A 396-amino-acid polypeptide reads, in one-letter code: Acetyl-CoA acetyltransferase ERG10, cytosolic (396 aa).

The active-site Acyl-thioester intermediate is C91. Residue Y186 participates in K(+) binding. Positions 227 and 230 each coordinate CoA. The K(+) site is built by A246, P247, and V347. Active-site proton acceptor residues include H351 and C381. N382 contributes to the chloride binding site.

It belongs to the thiolase-like superfamily. Thiolase family. Homotetramer. The cofactor is K(+).

The protein resides in the cytoplasm. It is found in the cytosol. The enzyme catalyses 2 acetyl-CoA = acetoacetyl-CoA + CoA. The protein operates within metabolic intermediate biosynthesis; (R)-mevalonate biosynthesis; (R)-mevalonate from acetyl-CoA: step 1/3. Acetyl-CoA acetyltransferase; part of the first module of ergosterol biosynthesis pathway that includes the early steps of the pathway, conserved across all eukaryotes, and which results in the formation of mevalonate from acetyl-coenzyme A (acetyl-CoA). ERG10B catalyzes the formation of acetoacetyl-CoA from acetyl-CoA. The first module starts with the action of the cytosolic acetyl-CoA acetyltransferase ERG10B that catalyzes the formation of acetoacetyl-CoA. The hydroxymethylglutaryl-CoA synthases ERG13 then condenses acetyl-CoA with acetoacetyl-CoA to form HMG-CoA. The rate-limiting step of the early module is the reduction to mevalonate by the 3-hydroxy-3-methylglutaryl-coenzyme A (HMG-CoA) reductases HMG1. In Gibberella zeae (strain ATCC MYA-4620 / CBS 123657 / FGSC 9075 / NRRL 31084 / PH-1) (Wheat head blight fungus), this protein is Acetyl-CoA acetyltransferase ERG10, cytosolic.